Here is a 465-residue protein sequence, read N- to C-terminus: UDP-N-acetylmuramate--L-alanine ligase (465 aa).

118–124 (GTHGKTT) contributes to the ATP binding site.

Belongs to the MurCDEF family.

Its subcellular location is the cytoplasm. The enzyme catalyses UDP-N-acetyl-alpha-D-muramate + L-alanine + ATP = UDP-N-acetyl-alpha-D-muramoyl-L-alanine + ADP + phosphate + H(+). The protein operates within cell wall biogenesis; peptidoglycan biosynthesis. Its function is as follows. Cell wall formation. This chain is UDP-N-acetylmuramate--L-alanine ligase, found in Ruegeria pomeroyi (strain ATCC 700808 / DSM 15171 / DSS-3) (Silicibacter pomeroyi).